A 65-amino-acid chain; its full sequence is Large ribosomal subunit protein bL35 (65 aa).

This sequence belongs to the bacterial ribosomal protein bL35 family.

In Thermotoga maritima (strain ATCC 43589 / DSM 3109 / JCM 10099 / NBRC 100826 / MSB8), this protein is Large ribosomal subunit protein bL35.